Here is a 1969-residue protein sequence, read N- to C-terminus: Hybrid signal transduction histidine kinase B (1969 aa).

A compositionally biased stretch (polar residues) spans 1 to 10 (MEKSEQTNSF). Disordered stretches follow at residues 1-91 (MEKS…HETK), 218-335 (KINE…KTKQ), 412-436 (QQQQ…SSDK), 468-505 (NNIN…KNKL), and 551-598 (GSGG…YNNN). Residues 11 to 55 (ESSNNNNNNIDSNINNNLENNNNKNNNNNNNNNNNNNNNNNNIEN) show a composition bias toward low complexity. Residues 56-65 (SIDKNNKEDN) show a composition bias toward basic and acidic residues. Residues 72–86 (SHRKHRTRLKSKKGN) show a composition bias toward basic residues. The segment covering 242-252 (TNSSILKSSEQ) has biased composition (polar residues). Low complexity predominate over residues 280–292 (SSSSDEGSDNSKS). Residues 293 to 304 (QHSSVNTPTLSR) show a composition bias toward polar residues. Low complexity predominate over residues 313–335 (SQQSQKQSQQQSQQPQQQNKTKQ). Positions 416–425 (QHHRHYHHHI) are enriched in basic residues. Positions 469-492 (NINIQAPSTPVQSRNYPLFTTQSP) are enriched in polar residues. A compositionally biased stretch (gly residues) spans 551-571 (GSGGGGSGGGGGGGGGGGGIG). Positions 574–598 (SSFLDDNNNLNNGENFKNSNSYNNN) are enriched in low complexity. Helical transmembrane passes span 660-680 (AYIL…STIL), 684-704 (EWFI…LGKI), 708-728 (MYLI…TSII), 747-767 (LVMI…VILI), and 795-815 (FGEL…YTIL). A Histidine kinase domain is found at 967–1188 (TVSHELRTPI…TFSFTIPCGI (222 aa)). H970 carries the post-translational modification Phosphohistidine; by autocatalysis. 4 disordered regions span residues 1359–1415 (ASKD…HQLI), 1521–1563 (GIAL…TTQS), 1617–1709 (NNNF…SSHS), and 1755–1832 (QKPQ…TAAA). The span at 1373–1398 (GDGGRSLSGGGGGVGSNGNGNGGGGL) shows a compositional bias: gly residues. Composition is skewed to low complexity over residues 1399–1410 (DSNISPSELSSS) and 1527–1549 (SSSK…SPNS). 2 stretches are compositionally biased toward polar residues: residues 1554–1563 (ELGNGKTTQS) and 1626–1665 (KPST…SPHR). Low complexity-rich tracts occupy residues 1755 to 1774 (QKPQ…TSTQ) and 1781 to 1821 (KTTT…TTTT). In terms of domain architecture, Response regulatory spans 1840-1967 (KILLVEDNFV…DILIQMIKKH (128 aa)). D1889 bears the 4-aspartylphosphate mark.

It is found in the membrane. It carries out the reaction ATP + protein L-histidine = ADP + protein N-phospho-L-histidine.. Functionally, acts in the cytokinin signal transduction pathway that regulates spore germination. Required for the maintenance of spore dormancy. Does not appear to act as a cytokinin receptor. Probably undergoes ATP-dependent autophosphorylation at a conserved histidine residue in the kinase core, which is followed by transfer of the phosphoryl group to a conserved aspartate residue in the receiver domain. This Dictyostelium discoideum (Social amoeba) protein is Hybrid signal transduction histidine kinase B (dhkB).